A 281-amino-acid polypeptide reads, in one-letter code: sn-glycerol-3-phosphate transport system permease protein UgpE (281 aa).

Helical transmembrane passes span 16–36 (LILGIAVILFPLYVAFVAATL), 85–105 (FSITVGKITVSMLSAFAIVWF), 113–133 (FFWMIFITLMLPVEVRIFPTV), 142–162 (LNSYAGLTLPLMASATATFLF), 202–222 (ALFVITFIYGWNQYLWPLLII), and 247–267 (WNQVMAAMLLTLIPPVVIVLA). An ABC transmembrane type-1 domain is found at 77-268 (MLNSFIMAFS…IPPVVIVLAM (192 aa)).

Belongs to the binding-protein-dependent transport system permease family. UgpAE subfamily. As to quaternary structure, the complex is composed of two ATP-binding proteins (UgpC), two transmembrane proteins (UgpA and UgpE) and a solute-binding protein (UgpB).

Its subcellular location is the cell inner membrane. In terms of biological role, part of the ABC transporter complex UgpBAEC involved in sn-glycerol-3-phosphate (G3P) import. Probably responsible for the translocation of the substrate across the membrane. The polypeptide is sn-glycerol-3-phosphate transport system permease protein UgpE (ugpE) (Salmonella typhi).